The following is a 633-amino-acid chain: Kelch repeat and BTB domain-containing protein 11 (633 aa).

The interval methionine 1–alanine 118 is disordered. The span at serine 35–arginine 60 shows a compositional bias: polar residues. Residues alanine 61–serine 73 show a composition bias toward low complexity. Phosphoserine is present on residues serine 70, serine 73, serine 92, serine 95, serine 107, and serine 113. The BTB domain occupies proline 146–arginine 206. 4 Kelch repeats span residues arginine 317–asparagine 365, tyrosine 366–glycine 418, histidine 419–glycine 463, and isoleucine 465–glycine 506.

In Mus musculus (Mouse), this protein is Kelch repeat and BTB domain-containing protein 11 (Kbtbd11).